The chain runs to 378 residues: GDP-mannose-dependent alpha-mannosyltransferase (378 aa).

The protein belongs to the glycosyltransferase group 1 family. Glycosyltransferase 4 subfamily.

It participates in phospholipid metabolism; phosphatidylinositol metabolism. In terms of biological role, catalyzes the addition of a mannose residue from GDP-D-mannose to GlcAGroAc2 to generate 1,2-di-O-C16/C18:1-(alpha-D-mannopyranosyl)-(1-4)-(alpha-D-glucopyranosyluronic acid)-(1-3)-glycerol(ManGlcAGroAc2). The sequence is that of GDP-mannose-dependent alpha-mannosyltransferase (mgtA) from Mycobacterium tuberculosis (strain CDC 1551 / Oshkosh).